A 1358-amino-acid polypeptide reads, in one-letter code: Mediator of RNA polymerase II transcription subunit 12 (1358 aa).

The stretch at 629-654 (VRYNYEQLQIQLNTAKEQMLQEQFEH) forms a coiled coil.

The protein belongs to the Mediator complex subunit 12 family. As to quaternary structure, component of the SRB8-11 complex, which itself associates with the Mediator complex.

The protein resides in the nucleus. Functionally, component of the SRB8-11 complex. The SRB8-11 complex is a regulatory module of the Mediator complex which is itself involved in regulation of basal and activated RNA polymerase II-dependent transcription. The SRB8-11 complex may be involved in the transcriptional repression of a subset of genes regulated by Mediator. It may inhibit the association of the Mediator complex with RNA polymerase II to form the holoenzyme complex. This Eremothecium gossypii (strain ATCC 10895 / CBS 109.51 / FGSC 9923 / NRRL Y-1056) (Yeast) protein is Mediator of RNA polymerase II transcription subunit 12 (SRB8).